Reading from the N-terminus, the 176-residue chain is Large ribosomal subunit protein uL6 (176 aa).

It belongs to the universal ribosomal protein uL6 family. Part of the 50S ribosomal subunit.

This protein binds to the 23S rRNA, and is important in its secondary structure. It is located near the subunit interface in the base of the L7/L12 stalk, and near the tRNA binding site of the peptidyltransferase center. This is Large ribosomal subunit protein uL6 from Burkholderia ambifaria (strain MC40-6).